A 265-amino-acid polypeptide reads, in one-letter code: MDSYLLMWGLLTLIMVPGCFAELCDDDPPEITHATFKAMAYKEGTMLNCECKRGFRRIKSGSLYMLCTGNSSHSSWDNQCQCTSSATRNTTKQVTPQPEEQKERKTTEMQSPMQPVDQASLPGHCREPPPWENEATERIYHFVVGQTVYYQCVQGYRALHRGPAESVCKMTHGKTRWTQPQLICTGEMETSQFPGEEKPQASPEGRPESETSCLITTTDFQIQTEMAATMETFIFTTEYQVAVAGCVFLLISVLLLSGLTWQRRQ.

Residues 1–21 (MDSYLLMWGLLTLIMVPGCFA) form the signal peptide. The 63-residue stretch at 22–84 (ELCDDDPPEI…SWDNQCQCTS (63 aa)) folds into the Sushi 1 domain. Residues 22–240 (ELCDDDPPEI…ETFIFTTEYQ (219 aa)) are Extracellular-facing. 3 disulfide bridges follow: Cys24–Cys67, Cys49–Cys80, and Cys51–Cys82. Asn70 and Asn89 each carry an N-linked (GlcNAc...) asparagine glycan. Over residues 87–98 (TRNTTKQVTPQP) the composition is skewed to polar residues. Positions 87–123 (TRNTTKQVTPQPEEQKERKTTEMQSPMQPVDQASLPG) are disordered. Residues 123-186 (GHCREPPPWE…WTQPQLICTG (64 aa)) form the Sushi 2 domain. 2 disulfides stabilise this stretch: Cys125–Cys168 and Cys152–Cys184. The segment at 190-210 (TSQFPGEEKPQASPEGRPESE) is disordered. A compositionally biased stretch (basic and acidic residues) spans 195-209 (GEEKPQASPEGRPES). The chain crosses the membrane as a helical span at residues 241–259 (VAVAGCVFLLISVLLLSGL). Residues 260 to 265 (TWQRRQ) are Cytoplasmic-facing.

As to quaternary structure, non-covalent dimer of an alpha and a beta subunit. IL2R exists in 3 different forms: a high affinity dimer, an intermediate affinity monomer (beta subunit), and a low affinity monomer (alpha subunit). The high and intermediate affinity forms also associate with a gamma subunit.

Its subcellular location is the membrane. Its function is as follows. Receptor for interleukin-2. The receptor is involved in the regulation of immune tolerance by controlling regulatory T cells (TREGs) activity. TREGs suppress the activation and expansion of autoreactive T-cells. This is Interleukin-2 receptor subunit alpha (IL2RA) from Pan troglodytes (Chimpanzee).